A 195-amino-acid polypeptide reads, in one-letter code: GTP-dependent dephospho-CoA kinase (195 aa).

GTP-binding residues include Asp49, Val50, Asp68, Glu127, and Asp150.

It belongs to the GTP-dependent DPCK family.

The catalysed reaction is 3'-dephospho-CoA + GTP = GDP + CoA + H(+). The protein operates within cofactor biosynthesis; coenzyme A biosynthesis. Functionally, catalyzes the GTP-dependent phosphorylation of the 3'-hydroxyl group of dephosphocoenzyme A to form coenzyme A (CoA). In Methanosarcina acetivorans (strain ATCC 35395 / DSM 2834 / JCM 12185 / C2A), this protein is GTP-dependent dephospho-CoA kinase.